A 1129-amino-acid chain; its full sequence is Egg-laying defective protein 27 (1129 aa).

The segment covering 1-11 has biased composition (polar residues); it reads MSRFDSQCSSE. The segment at 1 to 43 is disordered; that stretch reads MSRFDSQCSSEDVNKEDECVPSSSEDSQDGVSSPMENDDEPEF. Residues 22–33 show a composition bias toward low complexity; it reads SSSEDSQDGVSS. The BAH domain maps to 87–223; that stretch reads TLYRLRDSVF…QDSTKLASTH (137 aa). One can recognise an ELM2 domain in the interval 224–327; the sequence is YAIRVGTSFQ…DALSELNAND (104 aa). Positions 332-384 constitute an SANT domain; the sequence is TDVDNMTQDDAKKFAKGIKQLGKNFSRIHRELLPHHSREQLVSYYYLWKKTPE. The disordered stretch occupies residues 388–434; sequence PKQAARRVNPTSIKRPTKEKVKASRPTSTEYLDFDSASESDVENNGP. Positions 419–429 are enriched in acidic residues; it reads LDFDSASESDV. The segment at 439–485 adopts a GATA-type; atypical zinc-finger fold; sequence CHHCYGAESKDWHHANGLLLCTDCRLHYKKYGQLRQIANRPSQVPAC. Disordered stretches follow at residues 488-636, 693-717, 790-814, 899-950, and 982-1040; these read KRSN…DPMP, RDET…SPED, QQNQ…QQAQ, MIAE…HAAA, and MAAQ…REHA. 2 stretches are compositionally biased toward polar residues: residues 525 to 545 and 561 to 573; these read PSTV…TKKL and VINN…SSEE. Composition is skewed to acidic residues over residues 613-634 and 705-717; these read SYDD…DDDP and KDDE…SPED. Residues 899–914 show a composition bias toward low complexity; it reads MIAEQQQQQRHAAAQQ. Residues 915–932 show a composition bias toward basic and acidic residues; the sequence is LREREQREQRERERERQH. 2 stretches are compositionally biased toward low complexity: residues 933–950 and 983–999; these read QQQA…HAAA and AAQQ…AQAQ. Positions 1000–1040 are enriched in basic and acidic residues; that stretch reads RDQERERREREAREREAAREREREQAAREAAARDQAAREHA.

In terms of assembly, interacts with ceh-6, sem-4 and sox-2. Interacts with wdr-5.1. As to expression, expression detected in anterior intestine and head region.

The protein resides in the nucleus. In terms of biological role, transcription factor which promotes stress survival and delays aging. Required for cell cycle progression and development of the mesodermal and endodermal embryonic lineages. Required for normal T-cell polarity, for correct migration of QL neuroblast descendants and other cells, for embryonic patterning and for the embryonic expression of hlh-8. Also required for the transdifferentiation of the Y rectal epithelial cell to the PDA motor neuron during larval development. The polypeptide is Egg-laying defective protein 27 (Caenorhabditis elegans).